Consider the following 307-residue polypeptide: Ribonuclease Z (307 aa).

Zn(2+) is bound by residues His-63, His-65, Asp-67, His-68, His-141, Asp-212, and His-270. Asp-67 serves as the catalytic Proton acceptor.

Belongs to the RNase Z family. As to quaternary structure, homodimer. The cofactor is Zn(2+).

The enzyme catalyses Endonucleolytic cleavage of RNA, removing extra 3' nucleotides from tRNA precursor, generating 3' termini of tRNAs. A 3'-hydroxy group is left at the tRNA terminus and a 5'-phosphoryl group is left at the trailer molecule.. Its function is as follows. Zinc phosphodiesterase, which displays some tRNA 3'-processing endonuclease activity. Probably involved in tRNA maturation, by removing a 3'-trailer from precursor tRNA. The polypeptide is Ribonuclease Z (Bacillus cereus (strain ZK / E33L)).